Reading from the N-terminus, the 60-residue chain is Large ribosomal subunit protein uL30 (60 aa).

The protein belongs to the universal ribosomal protein uL30 family. In terms of assembly, part of the 50S ribosomal subunit.

The protein is Large ribosomal subunit protein uL30 of Leuconostoc citreum (strain KM20).